Reading from the N-terminus, the 292-residue chain is Protease HtpX (292 aa).

2 helical membrane-spanning segments follow: residues isoleucine 4–leucine 24 and glycine 34–serine 54. Histidine 139 lines the Zn(2+) pocket. The active site involves glutamate 140. Histidine 143 contributes to the Zn(2+) binding site. 2 helical membrane passes run isoleucine 158–leucine 178 and methionine 192–isoleucine 212. Glutamate 221 contributes to the Zn(2+) binding site.

This sequence belongs to the peptidase M48B family. Requires Zn(2+) as cofactor.

Its subcellular location is the cell inner membrane. The protein is Protease HtpX of Serratia proteamaculans (strain 568).